The chain runs to 125 residues: Small ribosomal subunit protein uS12m (125 aa).

Residues 1–24 are disordered; that stretch reads MPTSNQSIRHGREKKRRTDRTRAL. Positions 9–19 are enriched in basic residues; the sequence is RHGREKKRRTD.

The protein belongs to the universal ribosomal protein uS12 family.

Its subcellular location is the mitochondrion. Its function is as follows. Protein S12 is involved in the translation initiation step. The sequence is that of Small ribosomal subunit protein uS12m (RPS12) from Pinus sylvestris (Scotch pine).